Here is a 140-residue protein sequence, read N- to C-terminus: PDZ domain-containing protein 11 (140 aa).

The 83-residue stretch at 47–129 (TVVLKKPPGA…ITMRVRYFPY (83 aa)) folds into the PDZ domain.

It localises to the cytoplasm. This is PDZ domain-containing protein 11 (PDZD11) from Gallus gallus (Chicken).